An 88-amino-acid polypeptide reads, in one-letter code: Small ribosomal subunit protein bS20 (88 aa).

The tract at residues 1–27 is disordered; that stretch reads MANIPSAKKRARQAEKRRKHNQSQRSM. A compositionally biased stretch (basic residues) spans 7–22; that stretch reads AKKRARQAEKRRKHNQ.

The protein belongs to the bacterial ribosomal protein bS20 family.

Its function is as follows. Binds directly to 16S ribosomal RNA. The chain is Small ribosomal subunit protein bS20 from Alkalilimnicola ehrlichii (strain ATCC BAA-1101 / DSM 17681 / MLHE-1).